The chain runs to 321 residues: Nacrein-like protein (321 aa).

Residues 1 to 319 (RGPKNWCKVH…NKNVIVYRNH (319 aa)) form the Alpha-carbonic anhydrase domain. His-58 functions as the Proton acceptor in the catalytic mechanism.

The protein belongs to the alpha-carbonic anhydrase family. Component of the organic matrix of calcified shell layers like nacre and prisms.

The protein localises to the secreted. This chain is Nacrein-like protein, found in Mytilus californianus (California mussel).